The primary structure comprises 184 residues: Ribosome maturation factor RimM (184 aa).

A PRC barrel domain is found at 104–184 (SEDEFYWREL…RIEVDWDPGF (81 aa)).

This sequence belongs to the RimM family. In terms of assembly, binds ribosomal protein uS19.

The protein resides in the cytoplasm. In terms of biological role, an accessory protein needed during the final step in the assembly of 30S ribosomal subunit, possibly for assembly of the head region. Essential for efficient processing of 16S rRNA. May be needed both before and after RbfA during the maturation of 16S rRNA. It has affinity for free ribosomal 30S subunits but not for 70S ribosomes. The sequence is that of Ribosome maturation factor RimM from Vibrio atlanticus (strain LGP32) (Vibrio splendidus (strain Mel32)).